A 158-amino-acid polypeptide reads, in one-letter code: Small ribosomal subunit protein uS19 (158 aa).

This sequence belongs to the universal ribosomal protein uS19 family.

Protein S19 forms a complex with S13 that binds strongly to the 16S ribosomal RNA. In Pyrobaculum neutrophilum (strain DSM 2338 / JCM 9278 / NBRC 100436 / V24Sta) (Thermoproteus neutrophilus), this protein is Small ribosomal subunit protein uS19.